The chain runs to 213 residues: Proteasome subunit beta (213 aa).

Residues 1–11 (MPEQYQESMTG) constitute a propeptide, removed in mature form; by autocatalysis. Threonine 12 serves as the catalytic Nucleophile.

This sequence belongs to the peptidase T1B family. The 20S proteasome core is composed of 14 alpha and 14 beta subunits that assemble into four stacked heptameric rings, resulting in a barrel-shaped structure. The two inner rings, each composed of seven catalytic beta subunits, are sandwiched by two outer rings, each composed of seven alpha subunits. The catalytic chamber with the active sites is on the inside of the barrel. Has a gated structure, the ends of the cylinder being occluded by the N-termini of the alpha-subunits. Is capped at one or both ends by the proteasome regulatory ATPase, PAN.

It localises to the cytoplasm. The catalysed reaction is Cleavage of peptide bonds with very broad specificity.. Its activity is regulated as follows. The formation of the proteasomal ATPase PAN-20S proteasome complex, via the docking of the C-termini of PAN into the intersubunit pockets in the alpha-rings, triggers opening of the gate for substrate entry. Interconversion between the open-gate and close-gate conformations leads to a dynamic regulation of the 20S proteasome proteolysis activity. Functionally, component of the proteasome core, a large protease complex with broad specificity involved in protein degradation. The sequence is that of Proteasome subunit beta from Methanoregula boonei (strain DSM 21154 / JCM 14090 / 6A8).